A 323-amino-acid polypeptide reads, in one-letter code: Aquaporin-4 (323 aa).

Over 1-36 (MSDRPAARRWGKCGPLCTRESIMVAFKGVWTQTFWK) the chain is Cytoplasmic. Residues Cys13 and Cys17 are each lipidated (S-palmitoyl cysteine). Residues 37–57 (AVTAEFLAMLIFVLLSLGSTI) traverse the membrane as a helical segment. Topologically, residues 58–69 (NWGGAEKPLPVD) are extracellular. The helical transmembrane segment at 70 to 89 (MVLISLCFGLSIATMVQCFG) threads the bilayer. Residues 90–93 (HISG) are Cytoplasmic-facing. The discontinuously helical intramembrane region spans 94–101 (GHINPAVT). The NPA 1 motif lies at 97-99 (NPA). Topologically, residues 102–115 (VAMVCTRRISIAKS) are cytoplasmic. Ser111 carries the phosphoserine; by PKG modification. The helical transmembrane segment at 116–136 (VFYIAAQCLGAIIGAGILYLV) threads the bilayer. The Extracellular segment spans residues 137-155 (TPPSVVGGLGVTTVHGNLS). Asn153 is a glycosylation site (N-linked (GlcNAc...) asparagine). A helical membrane pass occupies residues 156–176 (AGHGLLVELIITFQLVFTIFA). The Cytoplasmic portion of the chain corresponds to 177–184 (SCDSKRTD). Ser180 carries the post-translational modification Phosphoserine; by PKC. The chain crosses the membrane as a helical span at residues 185 to 205 (VTGSIALAIGISVAIGHLFAI). A glycan (N-linked (GlcNAc...) asparagine) is linked at Asn206. At 206-208 (NYT) the chain is on the extracellular side. Positions 209–222 (GASMNPARSFGPAV) form an intramembrane region, discontinuously helical. Positions 213-215 (NPA) match the NPA 2 motif. The Extracellular portion of the chain corresponds to 223–231 (IMGNWENHW). Residues 232 to 252 (IYWVGPIIGAVLAGGLYEYVF) form a helical membrane-spanning segment. At 253–323 (CPDVELKRRF…DPSGEVLSSV (71 aa)) the chain is on the cytoplasmic side. A phosphoserine mark is found at Ser276 and Ser285. Phosphothreonine is present on Thr289. Ser321 carries the post-translational modification Phosphoserine.

Belongs to the MIP/aquaporin (TC 1.A.8) family. Homotetramer. The tetramers can form oligomeric arrays in membranes. The size of the oligomers differs between tissues and is smaller in skeletal muscle than in brain. Interaction between AQP4 oligomeric arrays in close-by cells can contribute to cell-cell adhesion. Part of a complex containing MLC1, TRPV4, HEPACAM and ATP1B1. Post-translationally, phosphorylation by PKC at Ser-180 reduces conductance by 50%. Phosphorylation by PKG at Ser-111 in response to glutamate increases conductance by 40%. Isoform 2: Palmitoylated on its N-terminal region. Isoform 1: Not palmitoylated. Detected in brain and lung.

Its subcellular location is the cell membrane. The protein localises to the basolateral cell membrane. It localises to the endosome membrane. It is found in the sarcolemma. The protein resides in the cell projection. It carries out the reaction H2O(in) = H2O(out). Functionally, forms a water-specific channel. Plays an important role in brain water homeostasis and in glymphatic solute transport. Required for a normal rate of water exchange across the blood brain interface. Required for normal levels of cerebrospinal fluid influx into the brain cortex and parenchyma along paravascular spaces that surround penetrating arteries, and for normal drainage of interstitial fluid along paravenous drainage pathways. Thereby, it is required for normal clearance of solutes from the brain interstitial fluid, including soluble beta-amyloid peptides derived from APP. Plays a redundant role in urinary water homeostasis and urinary concentrating ability. This chain is Aquaporin-4 (AQP4), found in Bos taurus (Bovine).